A 360-amino-acid chain; its full sequence is Peptide chain release factor 1 (360 aa).

At Q235 the chain carries N5-methylglutamine. The segment covering 291 to 308 (ASERRNLLGTGDRSDRNR) has biased composition (basic and acidic residues). Residues 291–312 (ASERRNLLGTGDRSDRNRTYNF) form a disordered region.

It belongs to the prokaryotic/mitochondrial release factor family. Post-translationally, methylated by PrmC. Methylation increases the termination efficiency of RF1.

It is found in the cytoplasm. Functionally, peptide chain release factor 1 directs the termination of translation in response to the peptide chain termination codons UAG and UAA. This chain is Peptide chain release factor 1, found in Yersinia pseudotuberculosis serotype O:1b (strain IP 31758).